The following is a 777-amino-acid chain: Ribosome-releasing factor 2, mitochondrial (777 aa).

In terms of domain architecture, tr-type G spans 68-353; the sequence is AKIRNIGIMA…AITMYLPSPE (286 aa). Residues 77-84, 141-145, and 195-198 contribute to the GTP site; these read AHIDAGKT, DTPGH, and NKMD.

This sequence belongs to the TRAFAC class translation factor GTPase superfamily. Classic translation factor GTPase family. EF-G/EF-2 subfamily.

It localises to the mitochondrion. It catalyses the reaction GTP + H2O = GDP + phosphate + H(+). Functionally, mitochondrial GTPase that mediates the disassembly of ribosomes from messenger RNA at the termination of mitochondrial protein biosynthesis. Acts in collaboration with MRRF. GTP hydrolysis follows the ribosome disassembly and probably occurs on the ribosome large subunit. Not involved in the GTP-dependent ribosomal translocation step during translation elongation. In Bos taurus (Bovine), this protein is Ribosome-releasing factor 2, mitochondrial.